Here is a 318-residue protein sequence, read N- to C-terminus: Methionyl-tRNA formyltransferase (318 aa).

Position 112–115 (112–115 (SILP)) interacts with (6S)-5,6,7,8-tetrahydrofolate.

This sequence belongs to the Fmt family.

The catalysed reaction is L-methionyl-tRNA(fMet) + (6R)-10-formyltetrahydrofolate = N-formyl-L-methionyl-tRNA(fMet) + (6S)-5,6,7,8-tetrahydrofolate + H(+). In terms of biological role, attaches a formyl group to the free amino group of methionyl-tRNA(fMet). The formyl group appears to play a dual role in the initiator identity of N-formylmethionyl-tRNA by promoting its recognition by IF2 and preventing the misappropriation of this tRNA by the elongation apparatus. The protein is Methionyl-tRNA formyltransferase of Shewanella putrefaciens (strain CN-32 / ATCC BAA-453).